Here is a 619-residue protein sequence, read N- to C-terminus: Dihydroxy-acid dehydratase (619 aa).

Residue D81 participates in Mg(2+) binding. Residue C122 participates in [2Fe-2S] cluster binding. Residues D123 and K124 each coordinate Mg(2+). K124 is subject to N6-carboxylysine. C195 is a [2Fe-2S] cluster binding site. E494 is a Mg(2+) binding site. S520 functions as the Proton acceptor in the catalytic mechanism.

The protein belongs to the IlvD/Edd family. As to quaternary structure, homodimer. [2Fe-2S] cluster serves as cofactor. The cofactor is Mg(2+).

The enzyme catalyses (2R)-2,3-dihydroxy-3-methylbutanoate = 3-methyl-2-oxobutanoate + H2O. It carries out the reaction (2R,3R)-2,3-dihydroxy-3-methylpentanoate = (S)-3-methyl-2-oxopentanoate + H2O. The protein operates within amino-acid biosynthesis; L-isoleucine biosynthesis; L-isoleucine from 2-oxobutanoate: step 3/4. Its pathway is amino-acid biosynthesis; L-valine biosynthesis; L-valine from pyruvate: step 3/4. Its function is as follows. Functions in the biosynthesis of branched-chain amino acids. Catalyzes the dehydration of (2R,3R)-2,3-dihydroxy-3-methylpentanoate (2,3-dihydroxy-3-methylvalerate) into 2-oxo-3-methylpentanoate (2-oxo-3-methylvalerate) and of (2R)-2,3-dihydroxy-3-methylbutanoate (2,3-dihydroxyisovalerate) into 2-oxo-3-methylbutanoate (2-oxoisovalerate), the penultimate precursor to L-isoleucine and L-valine, respectively. The polypeptide is Dihydroxy-acid dehydratase (Shewanella oneidensis (strain ATCC 700550 / JCM 31522 / CIP 106686 / LMG 19005 / NCIMB 14063 / MR-1)).